The sequence spans 86 residues: Anti-adapter protein IraP (86 aa).

The stretch at methionine 1–methionine 36 forms a coiled coil.

It belongs to the IraP family. Interacts with RssB.

The protein localises to the cytoplasm. Its function is as follows. Inhibits RpoS proteolysis by regulating RssB activity, thereby increasing the stability of the sigma stress factor RpoS especially during phosphate starvation, but also in stationary phase and during nitrogen starvation. Its effect on RpoS stability is due to its interaction with RssB, which probably blocks the interaction of RssB with RpoS, and the consequent delivery of the RssB-RpoS complex to the ClpXP protein degradation pathway. This Citrobacter koseri (strain ATCC BAA-895 / CDC 4225-83 / SGSC4696) protein is Anti-adapter protein IraP.